A 445-amino-acid chain; its full sequence is Methionine aminopeptidase 2-3 (445 aa).

The tract at residues 14–115 (ISDADANGAD…ENRYRTTSEE (102 aa)) is disordered. The segment covering 38-47 (EDDDSDDDVA) has biased composition (acidic residues). The segment covering 60–75 (AKKKKNKKRKPKKKQP) has biased composition (basic residues). A compositionally biased stretch (polar residues) spans 85–95 (PLSQLFPNNTY). The span at 97-115 (KGEEVEYKDENRYRTTSEE) shows a compositional bias: basic and acidic residues. His-198 is a substrate binding site. Positions 218, 229, and 298 each coordinate a divalent metal cation. His-306 is a substrate binding site. A divalent metal cation-binding residues include Glu-331 and Glu-426.

This sequence belongs to the peptidase M24A family. Methionine aminopeptidase eukaryotic type 2 subfamily. Requires Co(2+) as cofactor. Zn(2+) serves as cofactor. Mn(2+) is required as a cofactor. The cofactor is Fe(2+).

It is found in the cytoplasm. It carries out the reaction Release of N-terminal amino acids, preferentially methionine, from peptides and arylamides.. Its function is as follows. Cotranslationally removes the N-terminal methionine from nascent proteins. The N-terminal methionine is often cleaved when the second residue in the primary sequence is small and uncharged (Met-Ala-, Cys, Gly, Pro, Ser, Thr, or Val). This chain is Methionine aminopeptidase 2-3, found in Neosartorya fischeri (strain ATCC 1020 / DSM 3700 / CBS 544.65 / FGSC A1164 / JCM 1740 / NRRL 181 / WB 181) (Aspergillus fischerianus).